The chain runs to 236 residues: GCN5-related N-acetyltransferase 8 (236 aa).

The region spanning 96–235 is the N-acetyltransferase domain; sequence ATITSSPSPD…DALEAFDQVN (140 aa). Acetyl-CoA-binding positions include 161-163, 169-174, 200-202, and Tyr207; these read IFV, RKGFGS, and NVN. The Proton donor role is filled by Tyr207.

The protein belongs to the acetyltransferase family. GNAT subfamily. Oligomer. As to expression, expressed throughout the plant.

The protein resides in the cytoplasm. The protein localises to the nucleus. The enzyme catalyses an N-terminal L-alpha-aminoacyl-[protein] + acetyl-CoA = N-terminal N(alpha)-acetyl-L-alpha-aminoacyl-[protein] + CoA + H(+). It carries out the reaction L-lysyl-[protein] + acetyl-CoA = N(6)-acetyl-L-lysyl-[protein] + CoA + H(+). In terms of biological role, probable protein acetyltransferase with dual specificity triggering both N-alpha-acetylation (NTA) and epsilon-lysine acetylation (KA). This chain is GCN5-related N-acetyltransferase 8, found in Arabidopsis thaliana (Mouse-ear cress).